Here is a 414-residue protein sequence, read N- to C-terminus: Secernin-1 (414 aa).

Position 2 is an N-acetylalanine (Ala-2). Cys-9 is a catalytic residue.

The protein belongs to the peptidase C69 family. Secernin subfamily.

Its subcellular location is the cytoplasm. Regulates exocytosis in mast cells. Increases both the extent of secretion and the sensitivity of mast cells to stimulation with calcium. The chain is Secernin-1 (SCRN1) from Bos taurus (Bovine).